The following is a 649-amino-acid chain: Protein phosphatase Slingshot homolog 3 (649 aa).

A compositionally biased stretch (polar residues) spans 1 to 20; sequence MALVTVSRSPPASGHSTPVG. The tract at residues 1 to 32 is disordered; sequence MALVTVSRSPPASGHSTPVGPTQDRVVRRRGR. A2 carries the post-translational modification N-acetylalanine. Phosphoserine is present on residues S9 and S38. Residues 49–90 form a disordered region; it reads LQDGGDSNVASEADSEPMEEPSGEEQPTEDQTDKGQGLQSPW. Residues 61 to 78 are compositionally biased toward acidic residues; that stretch reads ADSEPMEEPSGEEQPTED. A Phosphoserine modification is found at S88. A DEK-C domain is found at 266–321; it reads EKMEQAILAELWQVLDTSDLDSVTSKEIRQALELRLGCPLQQYRDFIDNQMLLLMA. A Tyrosine-protein phosphatase domain is found at 325–466; the sequence is RASRIFPHLY…LRTYQGILTA (142 aa). The active-site Phosphocysteine intermediate is C410. Low complexity-rich tracts occupy residues 541–551 and 608–627; these read LEPSESESTPE and TRAFQEQGQGQEQSEPGMSS. Disordered regions lie at residues 541 to 586 and 608 to 649; these read LEPS…KGPW and TRAF…EDKA. The span at 639 to 649 shows a compositional bias: basic and acidic residues; it reads SVDDSREEDKA.

Belongs to the protein-tyrosine phosphatase family. Does not bind to, or colocalize with, filamentous actin. As to expression, expressed in brain, small intestine and testis. Also expressed at lower levels in heart, kidney, liver, spleen and thymus.

The protein localises to the cytoplasm. It is found in the cytoskeleton. Its subcellular location is the nucleus. The catalysed reaction is O-phospho-L-tyrosyl-[protein] + H2O = L-tyrosyl-[protein] + phosphate. The enzyme catalyses O-phospho-L-seryl-[protein] + H2O = L-seryl-[protein] + phosphate. It catalyses the reaction O-phospho-L-threonyl-[protein] + H2O = L-threonyl-[protein] + phosphate. In terms of biological role, protein phosphatase which may play a role in the regulation of actin filament dynamics. Can dephosphorylate and activate the actin binding/depolymerizing factor cofilin, which subsequently binds to actin filaments and stimulates their disassembly. The protein is Protein phosphatase Slingshot homolog 3 (Ssh3) of Mus musculus (Mouse).